The following is a 392-amino-acid chain: Galactokinase (392 aa).

Alpha-D-galactose-binding residues include R37, E43, H44, and D46. ATP contacts are provided by G136, G138, S140, and S141. Alpha-D-galactose is bound at residue D186. The Proton acceptor role is filled by D186. A Phosphoserine modification is found at S230. Residue Y236 participates in alpha-D-galactose binding.

Belongs to the GHMP kinase family. GalK subfamily. As to quaternary structure, homodimer.

It catalyses the reaction alpha-D-galactose + ATP = alpha-D-galactose 1-phosphate + ADP + H(+). Its pathway is carbohydrate metabolism; galactose metabolism. Functionally, catalyzes the transfer of a phosphate from ATP to alpha-D-galactose and participates in the first committed step in the catabolism of galactose. This chain is Galactokinase (GALK1), found in Bos taurus (Bovine).